The primary structure comprises 862 residues: Probable alpha,alpha-trehalose-phosphate synthase [UDP-forming] 11 (862 aa).

The residue at position 5 (serine 5) is a Phosphoserine. The segment at 50–538 (PKRIVVSNQL…ARSYDQDLQR (489 aa)) is glycosyltransferase. Residues 838 to 862 (SKHEQQKKQSKFTFQQPMGQCRKKA) are disordered.

The protein in the N-terminal section; belongs to the glycosyltransferase 20 family. It in the C-terminal section; belongs to the trehalose phosphatase family. Expressed in leaves, roots, stems and flowers.

It catalyses the reaction D-glucose 6-phosphate + UDP-alpha-D-glucose = alpha,alpha-trehalose 6-phosphate + UDP + H(+). In Arabidopsis thaliana (Mouse-ear cress), this protein is Probable alpha,alpha-trehalose-phosphate synthase [UDP-forming] 11 (TPS11).